The following is a 477-amino-acid chain: uncharacterized protein (477 aa).

Positions M1–S18 are cleaved as a signal peptide. The Extracellular segment spans residues H19–K427. 3 N-linked (GlcNAc...) asparagine glycosylation sites follow: N40, N51, and N77. Disordered regions lie at residues T79–D103, G239–P366, and K378–V398. A compositionally biased stretch (low complexity) spans T85–T97. Composition is skewed to polar residues over residues P253 to H288 and P298 to K309. N-linked (GlcNAc...) asparagine glycosylation occurs at N300. Composition is skewed to low complexity over residues S310–T326, T348–Q361, and K378–S393. A helical transmembrane segment spans residues M428–F448. The Cytoplasmic segment spans residues A449–M477.

Its subcellular location is the cell membrane. It is found in the golgi apparatus. The protein localises to the trans-Golgi network membrane. This is an uncharacterized protein from Rattus norvegicus (Rat).